Here is a 112-residue protein sequence, read N- to C-terminus: Tyrosine-protein phosphatase 17 (112 aa).

The Tyrosine-protein phosphatase domain maps to 1 to 112 (WRMIWEHECC…QPHTAGPIVV (112 aa)). D82 is a substrate binding site.

The protein belongs to the protein-tyrosine phosphatase family.

The catalysed reaction is O-phospho-L-tyrosyl-[protein] + H2O = L-tyrosyl-[protein] + phosphate. The chain is Tyrosine-protein phosphatase 17 (STY-17) from Styela plicata (Wrinkled sea squirt).